Consider the following 122-residue polypeptide: Large ribosomal subunit protein bL12 (122 aa).

The protein belongs to the bacterial ribosomal protein bL12 family. Homodimer. Part of the ribosomal stalk of the 50S ribosomal subunit. Forms a multimeric L10(L12)X complex, where L10 forms an elongated spine to which 2 to 4 L12 dimers bind in a sequential fashion. Binds GTP-bound translation factors.

Its function is as follows. Forms part of the ribosomal stalk which helps the ribosome interact with GTP-bound translation factors. Is thus essential for accurate translation. This Deinococcus geothermalis (strain DSM 11300 / CIP 105573 / AG-3a) protein is Large ribosomal subunit protein bL12.